Reading from the N-terminus, the 226-residue chain is Cold-regulated 413 inner membrane protein 2, chloroplastic (226 aa).

The transit peptide at 1-76 (MASLCLSSSR…RKRGSSVVCY (76 aa)) directs the protein to the chloroplast. Over 77–79 (ATP) the chain is Stromal. Residues 80–100 (MLSVHNLQWISTISCVALMFA) traverse the membrane as a helical segment. Over 101 to 103 (RGT) the chain is Chloroplast intermembrane. A helical membrane pass occupies residues 104–124 (GIHKSFVVPLFALQAPMGIVS). The Stromal segment spans residues 125 to 129 (WMKGE). The helical transmembrane segment at 130–150 (YGIWAAFLALLTRLFFSFPVE) threads the bilayer. At 151–152 (LE) the chain is on the chloroplast intermembrane side. Residues 153-173 (LPFIALLLVIVAPYQVMSIRG) traverse the membrane as a helical segment. The Stromal portion of the chain corresponds to 174–176 (KQE). Residues 177 to 197 (GAILSLAISCFLAFQHFSRAG) form a helical membrane-spanning segment. Topologically, residues 198–205 (TLQKAFDQ) are chloroplast intermembrane. Residues 206–226 (NSVLATVAIIGVTVVSFLFLI) form a helical membrane-spanning segment.

Belongs to the Cold-regulated 413 protein family.

It localises to the plastid. Its subcellular location is the chloroplast inner membrane. The protein is Cold-regulated 413 inner membrane protein 2, chloroplastic (COR413IM2) of Arabidopsis thaliana (Mouse-ear cress).